Here is a 435-residue protein sequence, read N- to C-terminus: tRNA modification GTPase MnmE (435 aa).

The (6S)-5-formyl-5,6,7,8-tetrahydrofolate site is built by Arg-24, Glu-82, and Lys-122. In terms of domain architecture, TrmE-type G spans 219–360 (GFIIAIAGPP…LIAEMERRLG (142 aa)). Asn-229 contributes to the K(+) binding site. Residues 229–234 (NAGKST), 248–254 (SPVPGTT), and 273–276 (DTAG) each bind GTP. Ser-233 is a Mg(2+) binding site. K(+)-binding residues include Ser-248, Val-250, and Thr-253. Mg(2+) is bound at residue Thr-254. Position 435 (Lys-435) interacts with (6S)-5-formyl-5,6,7,8-tetrahydrofolate.

This sequence belongs to the TRAFAC class TrmE-Era-EngA-EngB-Septin-like GTPase superfamily. TrmE GTPase family. In terms of assembly, homodimer. Heterotetramer of two MnmE and two MnmG subunits. Requires K(+) as cofactor.

The protein localises to the cytoplasm. Its function is as follows. Exhibits a very high intrinsic GTPase hydrolysis rate. Involved in the addition of a carboxymethylaminomethyl (cmnm) group at the wobble position (U34) of certain tRNAs, forming tRNA-cmnm(5)s(2)U34. The protein is tRNA modification GTPase MnmE of Azorhizobium caulinodans (strain ATCC 43989 / DSM 5975 / JCM 20966 / LMG 6465 / NBRC 14845 / NCIMB 13405 / ORS 571).